Reading from the N-terminus, the 214-residue chain is Riboflavin kinase (214 aa).

The tract at residues 1–26 is disordered; sequence MRPDGPRDPVAGPDSGPEPPYPVRLS. Positions 44 and 46 each coordinate Mg(2+). E116 (nucleophile) is an active-site residue.

It belongs to the flavokinase family. It depends on Zn(2+) as a cofactor. Mg(2+) serves as cofactor.

The catalysed reaction is riboflavin + ATP = FMN + ADP + H(+). It functions in the pathway cofactor biosynthesis; FMN biosynthesis; FMN from riboflavin (ATP route): step 1/1. Functionally, catalyzes the phosphorylation of riboflavin (vitamin B2) to form flavin mononucleotide (FMN) coenzyme. The polypeptide is Riboflavin kinase (fmn1) (Aspergillus fumigatus (strain ATCC MYA-4609 / CBS 101355 / FGSC A1100 / Af293) (Neosartorya fumigata)).